We begin with the raw amino-acid sequence, 231 residues long: 2-phospho-L-lactate guanylyltransferase (231 aa).

This sequence belongs to the CofC family. In terms of assembly, homodimer.

It carries out the reaction (2S)-2-phospholactate + GTP + H(+) = (2S)-lactyl-2-diphospho-5'-guanosine + diphosphate. It functions in the pathway cofactor biosynthesis; coenzyme F420 biosynthesis. In terms of biological role, guanylyltransferase that catalyzes the activation of (2S)-2-phospholactate (2-PL) as (2S)-lactyl-2-diphospho-5'-guanosine, via the condensation of 2-PL with GTP. It is involved in the biosynthesis of coenzyme F420, a hydride carrier cofactor. The chain is 2-phospho-L-lactate guanylyltransferase from Haloterrigena turkmenica (strain ATCC 51198 / DSM 5511 / JCM 9101 / NCIMB 13204 / VKM B-1734 / 4k) (Halococcus turkmenicus).